We begin with the raw amino-acid sequence, 274 residues long: Large ribosomal subunit protein uL2 (274 aa).

Residues 224–274 (VAMNPVDHPHGGGEGRTSGGRHPVTPWGIPTKGYKTRRNKRSNKLIVQKRK) form a disordered region. The segment covering 257–274 (YKTRRNKRSNKLIVQKRK) has biased composition (basic residues).

Belongs to the universal ribosomal protein uL2 family. In terms of assembly, part of the 50S ribosomal subunit. Forms a bridge to the 30S subunit in the 70S ribosome.

In terms of biological role, one of the primary rRNA binding proteins. Required for association of the 30S and 50S subunits to form the 70S ribosome, for tRNA binding and peptide bond formation. It has been suggested to have peptidyltransferase activity; this is somewhat controversial. Makes several contacts with the 16S rRNA in the 70S ribosome. This is Large ribosomal subunit protein uL2 from Francisella tularensis subsp. mediasiatica (strain FSC147).